The primary structure comprises 860 residues: DNA mismatch repair protein MutS (860 aa).

Residue 607 to 614 (GPNMSGKS) participates in ATP binding.

It belongs to the DNA mismatch repair MutS family.

Functionally, this protein is involved in the repair of mismatches in DNA. It is possible that it carries out the mismatch recognition step. This protein has a weak ATPase activity. The polypeptide is DNA mismatch repair protein MutS (Listeria monocytogenes serotype 4a (strain HCC23)).